Consider the following 650-residue polypeptide: Threonine--tRNA ligase, chloroplastic/mitochondrial 2 (650 aa).

Zn(2+) is bound by residues Cys347, His398, and His524.

This sequence belongs to the class-II aminoacyl-tRNA synthetase family.

It is found in the plastid. Its subcellular location is the chloroplast. The protein localises to the mitochondrion. It carries out the reaction tRNA(Thr) + L-threonine + ATP = L-threonyl-tRNA(Thr) + AMP + diphosphate + H(+). This Arabidopsis thaliana (Mouse-ear cress) protein is Threonine--tRNA ligase, chloroplastic/mitochondrial 2.